A 153-amino-acid chain; its full sequence is 3-hydroxyacyl-[acyl-carrier-protein] dehydratase FabZ (153 aa).

His-47 is an active-site residue.

It belongs to the thioester dehydratase family. FabZ subfamily.

The protein resides in the cytoplasm. It carries out the reaction a (3R)-hydroxyacyl-[ACP] = a (2E)-enoyl-[ACP] + H2O. In terms of biological role, involved in unsaturated fatty acids biosynthesis. Catalyzes the dehydration of short chain beta-hydroxyacyl-ACPs and long chain saturated and unsaturated beta-hydroxyacyl-ACPs. This is 3-hydroxyacyl-[acyl-carrier-protein] dehydratase FabZ from Dichelobacter nodosus (strain VCS1703A).